Reading from the N-terminus, the 962-residue chain is Leucine--tRNA ligase (962 aa).

A 'HIGH' region motif is present at residues 40-51; that stretch reads PYPSGAGLHVGH. The short motif at 737-741 is the 'KMSKS' region element; sequence KMSKS. An ATP-binding site is contributed by Lys-740.

Belongs to the class-I aminoacyl-tRNA synthetase family.

Its subcellular location is the cytoplasm. It carries out the reaction tRNA(Leu) + L-leucine + ATP = L-leucyl-tRNA(Leu) + AMP + diphosphate. This Flavobacterium psychrophilum (strain ATCC 49511 / DSM 21280 / CIP 103535 / JIP02/86) protein is Leucine--tRNA ligase.